A 301-amino-acid polypeptide reads, in one-letter code: tRNA dimethylallyltransferase 2 (301 aa).

Gly11–Thr18 serves as a coordination point for ATP. Substrate is bound at residue Thr13–Thr18. The interaction with substrate tRNA stretch occupies residues Asp36 to Gln39.

This sequence belongs to the IPP transferase family. Monomer. Mg(2+) serves as cofactor.

It carries out the reaction adenosine(37) in tRNA + dimethylallyl diphosphate = N(6)-dimethylallyladenosine(37) in tRNA + diphosphate. In terms of biological role, catalyzes the transfer of a dimethylallyl group onto the adenine at position 37 in tRNAs that read codons beginning with uridine, leading to the formation of N6-(dimethylallyl)adenosine (i(6)A). This is tRNA dimethylallyltransferase 2 from Shewanella sediminis (strain HAW-EB3).